We begin with the raw amino-acid sequence, 437 residues long: Methylenetetrahydrofolate--tRNA-(uracil-5-)-methyltransferase TrmFO (437 aa).

Position 10 to 15 (10 to 15 (GAGLAG)) interacts with FAD.

This sequence belongs to the MnmG family. TrmFO subfamily. It depends on FAD as a cofactor.

Its subcellular location is the cytoplasm. The catalysed reaction is uridine(54) in tRNA + (6R)-5,10-methylene-5,6,7,8-tetrahydrofolate + NADH + H(+) = 5-methyluridine(54) in tRNA + (6S)-5,6,7,8-tetrahydrofolate + NAD(+). It catalyses the reaction uridine(54) in tRNA + (6R)-5,10-methylene-5,6,7,8-tetrahydrofolate + NADPH + H(+) = 5-methyluridine(54) in tRNA + (6S)-5,6,7,8-tetrahydrofolate + NADP(+). Its function is as follows. Catalyzes the folate-dependent formation of 5-methyl-uridine at position 54 (M-5-U54) in all tRNAs. The polypeptide is Methylenetetrahydrofolate--tRNA-(uracil-5-)-methyltransferase TrmFO (Pelotomaculum thermopropionicum (strain DSM 13744 / JCM 10971 / SI)).